The chain runs to 347 residues: Transcription factor EC (347 aa).

A necessary for transcriptional transactivation region spans residues 1 to 119; sequence MTLDHQIINP…GLTSASCPSS (119 aa). One can recognise a bHLH domain in the interval 139–192; that stretch reads QKKDNHNLIERRRRYNINYRIKELGTLIPKSNDPDMRWNKGTILKASVEYIKWL. Residues 271–347 are necessary for transcriptional transactivation; it reads PSPEFCDQAI…SFSSDDGDEL (77 aa). The disordered stretch occupies residues 319–347; that stretch reads DPLLSATSPAVSKESSRRSSFSSDDGDEL. A compositionally biased stretch (low complexity) spans 326–341; the sequence is SPAVSKESSRRSSFSS.

This sequence belongs to the MiT/TFE family. In terms of assembly, homodimer. Forms heterodimers with MITF and TFE3. Interacts with MITF.

It is found in the nucleus. Its function is as follows. Transcriptional regulator that acts as a repressor or an activator. Acts as a transcriptional repressor on minimal promoter containing element F (that includes an E-box sequence). Binds to element F in an E-box sequence-specific manner. Acts as a transcriptional transactivator on the proximal promoter region of the tartrate-resistant acid phosphatase (TRAP) E-box containing promoter. Collaborates with MITF in target gene activation. Acts as a transcriptional repressor on minimal promoter containing mu E3 enhancer sequence. Binds to mu E3 DNA sequence of the immunoglobulin heavy-chain gene enhancer. Binds DNA in a homo- or heterodimeric form. This Pan troglodytes (Chimpanzee) protein is Transcription factor EC (TFEC).